We begin with the raw amino-acid sequence, 590 residues long: Aspartate--tRNA(Asp/Asn) ligase (590 aa).

Glu175 is a binding site for L-aspartate. The tract at residues 199 to 202 is aspartate; sequence QQYK. L-aspartate contacts are provided by Arg221 and His450. 221-223 serves as a coordination point for ATP; the sequence is RDE. Position 484 (Glu484) interacts with ATP. Arg491 is an L-aspartate binding site. ATP is bound at residue 536–539; sequence GVDR.

This sequence belongs to the class-II aminoacyl-tRNA synthetase family. Type 1 subfamily. Homodimer.

The protein resides in the cytoplasm. The catalysed reaction is tRNA(Asx) + L-aspartate + ATP = L-aspartyl-tRNA(Asx) + AMP + diphosphate. Functionally, aspartyl-tRNA synthetase with relaxed tRNA specificity since it is able to aspartylate not only its cognate tRNA(Asp) but also tRNA(Asn). Reaction proceeds in two steps: L-aspartate is first activated by ATP to form Asp-AMP and then transferred to the acceptor end of tRNA(Asp/Asn). The sequence is that of Aspartate--tRNA(Asp/Asn) ligase from Bradyrhizobium sp. (strain BTAi1 / ATCC BAA-1182).